The sequence spans 281 residues: 4-hydroxy-3-methylbut-2-enyl diphosphate reductase (281 aa).

C12 is a [4Fe-4S] cluster binding site. (2E)-4-hydroxy-3-methylbut-2-enyl diphosphate is bound by residues H41 and H74. Residues H41 and H74 each contribute to the dimethylallyl diphosphate site. Isopentenyl diphosphate contacts are provided by H41 and H74. C96 provides a ligand contact to [4Fe-4S] cluster. H124 is a (2E)-4-hydroxy-3-methylbut-2-enyl diphosphate binding site. H124 contributes to the dimethylallyl diphosphate binding site. Isopentenyl diphosphate is bound at residue H124. The active-site Proton donor is the E126. T164 serves as a coordination point for (2E)-4-hydroxy-3-methylbut-2-enyl diphosphate. Position 193 (C193) interacts with [4Fe-4S] cluster. (2E)-4-hydroxy-3-methylbut-2-enyl diphosphate contacts are provided by S221, N223, and S265. 3 residues coordinate dimethylallyl diphosphate: S221, N223, and S265. Positions 221, 223, and 265 each coordinate isopentenyl diphosphate.

The protein belongs to the IspH family. The cofactor is [4Fe-4S] cluster.

The catalysed reaction is isopentenyl diphosphate + 2 oxidized [2Fe-2S]-[ferredoxin] + H2O = (2E)-4-hydroxy-3-methylbut-2-enyl diphosphate + 2 reduced [2Fe-2S]-[ferredoxin] + 2 H(+). It catalyses the reaction dimethylallyl diphosphate + 2 oxidized [2Fe-2S]-[ferredoxin] + H2O = (2E)-4-hydroxy-3-methylbut-2-enyl diphosphate + 2 reduced [2Fe-2S]-[ferredoxin] + 2 H(+). It participates in isoprenoid biosynthesis; dimethylallyl diphosphate biosynthesis; dimethylallyl diphosphate from (2E)-4-hydroxy-3-methylbutenyl diphosphate: step 1/1. Its pathway is isoprenoid biosynthesis; isopentenyl diphosphate biosynthesis via DXP pathway; isopentenyl diphosphate from 1-deoxy-D-xylulose 5-phosphate: step 6/6. In terms of biological role, catalyzes the conversion of 1-hydroxy-2-methyl-2-(E)-butenyl 4-diphosphate (HMBPP) into a mixture of isopentenyl diphosphate (IPP) and dimethylallyl diphosphate (DMAPP). Acts in the terminal step of the DOXP/MEP pathway for isoprenoid precursor biosynthesis. In Nitratidesulfovibrio vulgaris (strain DSM 19637 / Miyazaki F) (Desulfovibrio vulgaris), this protein is 4-hydroxy-3-methylbut-2-enyl diphosphate reductase.